The chain runs to 369 residues: Glycine oxidase (369 aa).

FAD-binding positions include 14–15 (II), 34–35 (ES), 42–43 (TT), 47–49 (AGM), and valine 174. Arginine 302 and arginine 329 together coordinate substrate. Residue 327–333 (HFRNGIL) participates in FAD binding.

This sequence belongs to the DAO family. ThiO subfamily. Homotetramer. It depends on FAD as a cofactor.

It is found in the cytoplasm. It carries out the reaction glycine + O2 + H2O = glyoxylate + H2O2 + NH4(+). The catalysed reaction is N-ethylglycine + O2 + H2O = ethylamine + glyoxylate + H2O2. It catalyses the reaction sarcosine + O2 + H2O = methylamine + glyoxylate + H2O2. The enzyme catalyses D-alanine + O2 + H2O = pyruvate + H2O2 + NH4(+). It carries out the reaction glyphosate + O2 + H2O = aminomethylphosphonate + glyoxylate + H2O2 + H(+). The protein operates within cofactor biosynthesis; thiamine diphosphate biosynthesis. Is competitively inhibited by glycolate. Functionally, catalyzes the FAD-dependent oxidative deamination of various amines and D-amino acids to yield the corresponding alpha-keto acids, ammonia/amine, and hydrogen peroxide. Oxidizes sarcosine (N-methylglycine), N-ethylglycine and glycine. Can also oxidize the herbicide glyphosate (N-phosphonomethylglycine). Displays lower activities on D-alanine, D-valine, D-proline and D-methionine. Does not act on L-amino acids and other D-amino acids. Is essential for thiamine biosynthesis since the oxidation of glycine catalyzed by ThiO generates the glycine imine intermediate (dehydroglycine) required for the biosynthesis of the thiazole ring of thiamine pyrophosphate. In Bacillus subtilis (strain 168), this protein is Glycine oxidase.